The sequence spans 152 residues: Deoxyuridine 5'-triphosphate nucleotidohydrolase (152 aa).

Residues 65 to 67 (RSG), asparagine 78, and 82 to 84 (TID) each bind substrate.

Belongs to the dUTPase family. Mg(2+) serves as cofactor.

It carries out the reaction dUTP + H2O = dUMP + diphosphate + H(+). It functions in the pathway pyrimidine metabolism; dUMP biosynthesis; dUMP from dCTP (dUTP route): step 2/2. In terms of biological role, this enzyme is involved in nucleotide metabolism: it produces dUMP, the immediate precursor of thymidine nucleotides and it decreases the intracellular concentration of dUTP so that uracil cannot be incorporated into DNA. In Chlorobaculum tepidum (strain ATCC 49652 / DSM 12025 / NBRC 103806 / TLS) (Chlorobium tepidum), this protein is Deoxyuridine 5'-triphosphate nucleotidohydrolase.